Here is a 344-residue protein sequence, read N- to C-terminus: Phosphoribosylformylglycinamidine cyclo-ligase (344 aa).

It belongs to the AIR synthase family.

Its subcellular location is the cytoplasm. It catalyses the reaction 2-formamido-N(1)-(5-O-phospho-beta-D-ribosyl)acetamidine + ATP = 5-amino-1-(5-phospho-beta-D-ribosyl)imidazole + ADP + phosphate + H(+). Its pathway is purine metabolism; IMP biosynthesis via de novo pathway; 5-amino-1-(5-phospho-D-ribosyl)imidazole from N(2)-formyl-N(1)-(5-phospho-D-ribosyl)glycinamide: step 2/2. The chain is Phosphoribosylformylglycinamidine cyclo-ligase from Exiguobacterium sp. (strain ATCC BAA-1283 / AT1b).